Consider the following 491-residue polypeptide: Protein nucleotidyltransferase YdiU (491 aa).

Residues glycine 94, glycine 96, arginine 97, lysine 117, aspartate 129, glycine 130, arginine 180, and arginine 187 each contribute to the ATP site. Aspartate 256 serves as the catalytic Proton acceptor. Asparagine 257 and aspartate 266 together coordinate Mg(2+). Residue aspartate 266 coordinates ATP.

It belongs to the SELO family. Requires Mg(2+) as cofactor. Mn(2+) serves as cofactor.

It catalyses the reaction L-seryl-[protein] + ATP = 3-O-(5'-adenylyl)-L-seryl-[protein] + diphosphate. The catalysed reaction is L-threonyl-[protein] + ATP = 3-O-(5'-adenylyl)-L-threonyl-[protein] + diphosphate. The enzyme catalyses L-tyrosyl-[protein] + ATP = O-(5'-adenylyl)-L-tyrosyl-[protein] + diphosphate. It carries out the reaction L-histidyl-[protein] + UTP = N(tele)-(5'-uridylyl)-L-histidyl-[protein] + diphosphate. It catalyses the reaction L-seryl-[protein] + UTP = O-(5'-uridylyl)-L-seryl-[protein] + diphosphate. The catalysed reaction is L-tyrosyl-[protein] + UTP = O-(5'-uridylyl)-L-tyrosyl-[protein] + diphosphate. Nucleotidyltransferase involved in the post-translational modification of proteins. It can catalyze the addition of adenosine monophosphate (AMP) or uridine monophosphate (UMP) to a protein, resulting in modifications known as AMPylation and UMPylation. The polypeptide is Protein nucleotidyltransferase YdiU (Clostridium botulinum (strain Okra / Type B1)).